Consider the following 56-residue polypeptide: Defensin-1 (56 aa).

Residues 1–24 form the signal peptide; sequence MKAIVVLLILALILCLYAMTTVEG. 3 disulfide bridges follow: Cys-26-Cys-45, Cys-31-Cys-53, and Cys-35-Cys-55.

It localises to the secreted. Functionally, antibacterial protein involved in the immune response to septic injury. When combined with 14.026 kDa and 14.059 kDa hemolymph antimicrobial peptides, it has a strong cooperative activity against the Gram-positive bacteria B.subtilis and S.aureus, and against the Gram-negative bacteria E.coli DH5-alpha and K.pneumoniae ATCC 138833. Does not show detectable antibacterial activity when present alone. Has no hemolytic activity in human erythrocytes. The polypeptide is Defensin-1 (Centruroides limpidus (Mexican scorpion)).